Here is a 233-residue protein sequence, read N- to C-terminus: Purine nucleoside phosphorylase DeoD-type (233 aa).

A purine D-ribonucleoside is bound at residue H4. Residues G20, R24, R43, and 87 to 90 each bind phosphate; that span reads RVGS. Residues 178–180 and 202–203 each bind a purine D-ribonucleoside; these read EME and SD. The active-site Proton donor is the D203.

Belongs to the PNP/UDP phosphorylase family. In terms of assembly, homohexamer; trimer of homodimers.

The enzyme catalyses a purine D-ribonucleoside + phosphate = a purine nucleobase + alpha-D-ribose 1-phosphate. The catalysed reaction is a purine 2'-deoxy-D-ribonucleoside + phosphate = a purine nucleobase + 2-deoxy-alpha-D-ribose 1-phosphate. Functionally, catalyzes the reversible phosphorolytic breakdown of the N-glycosidic bond in the beta-(deoxy)ribonucleoside molecules, with the formation of the corresponding free purine bases and pentose-1-phosphate. This chain is Purine nucleoside phosphorylase DeoD-type, found in Bacillus subtilis (strain 168).